A 67-amino-acid chain; its full sequence is Systemic RNA interference defective protein 5 (67 aa).

The Extracellular segment spans residues 1–18 (MPSKNCAKNLHACQWERD). The helical transmembrane segment at 19–39 (IALVFLGLMVLFNIGQVVYMN) threads the bilayer. Residues 40-67 (RARLYRLIRRGAEQIPADDEEPIIGIRD) are Cytoplasmic-facing.

As to expression, ubiquitously present in most tissues tested. Expressed in the somatic cells of intestine, muscle, neurons, somatic gonad and embryos but not in the germline (at protein level).

The protein localises to the late endosome membrane. Functionally, plays a role in RNA-mediated gene silencing by mediating transport of both ingested and endogenous dsRNA between cells. Not required for the uptake of dsRNA from the intestinal lumen. This chain is Systemic RNA interference defective protein 5, found in Caenorhabditis elegans.